We begin with the raw amino-acid sequence, 33 residues long: Rugosin-A (33 aa).

Cys27 and Cys33 form a disulfide bridge.

This sequence belongs to the frog skin active peptide (FSAP) family. Brevinin subfamily. Expressed by the skin glands.

The protein localises to the secreted. Has antibacterial activity against Gram-positive bacteria. This is Rugosin-A from Glandirana rugosa (Japanese wrinkled frog).